Here is a 712-residue protein sequence, read N- to C-terminus: Probable serine/threonine-protein kinase fhkE (712 aa).

The 55-residue stretch at 46-100 (ITFGRLKDSTVHYNDKSISGSHCKITRESNDDDGVVIAFIYDNSTNGTFIDNIKV) folds into the FHA domain. The Protein kinase domain occupies 145 to 411 (YFIGEMLGQG…CNNIIQHPWF (267 aa)). Residues 151 to 159 (LGQGNFATV) and Lys-174 each bind ATP. Catalysis depends on Asp-270, which acts as the Proton acceptor. The stretch at 414–442 (NVKLSTLLEEDERLRKKAEAEVEANNNNT) forms a coiled coil. The disordered stretch occupies residues 431–695 (AEAEVEANNN…KCQYDPNCYR (265 aa)). 5 stretches are compositionally biased toward low complexity: residues 436–446 (EANNNNTNKSN), 459–481 (GNCS…IKSN), 514–571 (NNDN…SNDT), 595–605 (NLQNHLNNNKI), and 616–639 (NNNN…NNNN). A compositionally biased stretch (polar residues) spans 669–678 (PQNSSNNNSG).

This sequence belongs to the protein kinase superfamily. CAMK Ser/Thr protein kinase family. CHK2 subfamily.

The catalysed reaction is L-seryl-[protein] + ATP = O-phospho-L-seryl-[protein] + ADP + H(+). The enzyme catalyses L-threonyl-[protein] + ATP = O-phospho-L-threonyl-[protein] + ADP + H(+). The sequence is that of Probable serine/threonine-protein kinase fhkE (fhkE) from Dictyostelium discoideum (Social amoeba).